The chain runs to 199 residues: N-(5'-phosphoribosyl)anthranilate isomerase (199 aa).

It belongs to the TrpF family.

The enzyme catalyses N-(5-phospho-beta-D-ribosyl)anthranilate = 1-(2-carboxyphenylamino)-1-deoxy-D-ribulose 5-phosphate. It participates in amino-acid biosynthesis; L-tryptophan biosynthesis; L-tryptophan from chorismate: step 3/5. The protein is N-(5'-phosphoribosyl)anthranilate isomerase of Streptococcus pneumoniae (strain Taiwan19F-14).